The following is a 579-amino-acid chain: Leucine-rich repeat-containing protein 15 (579 aa).

The N-terminal stretch at 1 to 21 is a signal peptide; it reads MPLKHYLLLLVSCQAWAAGLA. Positions 22–53 constitute an LRRNT domain; it reads YYGCPSECTCSRASQVECTGAQIVAMPSPLPW. Residues 22–536 lie on the Extracellular side of the membrane; it reads YYGCPSECTC…TWGMTDAQSG (515 aa). 15 LRR repeats span residues 54–75, 78–99, 102–123, 126–147, 150–171, 174–195, 198–219, 222–243, 246–267, 270–291, 294–315, 318–339, 342–363, 366–387, and 390–411; these read NAMS…KFLN, ALIA…AFRN, SLRH…LFQD, NLET…QFSQ, NLKE…VFDH, GLTK…VFQH, NLQV…TFDA, NLQE…LFHN, NLQR…IFMQ, HLNK…VFGP, NLRE…AFSH, QLQV…AFNG, NLRE…VFRS, NLRN…IFAN, and GLMT…IFDH. N-linked (GlcNAc...) asparagine glycosylation occurs at Asn-75. An N-linked (GlcNAc...) asparagine glycan is attached at Asn-369. In terms of domain architecture, LRRCT spans 423–473; sequence NPWRCDSNILPLHDWLILNRARLGTDTLPVCSSPASVRGQSLVIINVNFPG. The disordered stretch occupies residues 476–509; it reads VQGPETPEVSSYPDTSSYPDSTSISSTTEITRST. The segment covering 485-506 has biased composition (low complexity); sequence SSYPDTSSYPDSTSISSTTEIT. The chain crosses the membrane as a helical span at residues 537–557; that stretch reads LAIAAIVIGIIALACSLAACI. The Cytoplasmic segment spans residues 558 to 579; sequence CCCCCKKRSQAVLMQMKAPNEC.

Expressed in chodrocytes (at protein level).

It localises to the cell membrane. The sequence is that of Leucine-rich repeat-containing protein 15 (Lrrc15) from Mus musculus (Mouse).